The sequence spans 473 residues: Inactive FRIGIDA-like protein 2 (473 aa).

2 coiled-coil regions span residues 3-35 (AAES…RSLL) and 306-361 (SLKV…RATK). Residues 356-384 (RKRATKFNSPANPQQPQEQKVDNKRPRVA) are disordered. Polar residues predominate over residues 361 to 373 (KFNSPANPQQPQE).

The protein belongs to the Frigida family. Expressed at low levels throughout the plant, with slightly higher expression in developing seeds and the highest expression in pollen.

Inactive FRIGIDA-like 2 protein. This chain is Inactive FRIGIDA-like protein 2 (FRL2), found in Arabidopsis thaliana (Mouse-ear cress).